We begin with the raw amino-acid sequence, 1340 residues long: Pleckstrin homology domain-containing family G member 2 (1340 aa).

Polar residues predominate over residues 34–44; the sequence is TPTAQAATTMA. The tract at residues 34–76 is disordered; sequence TPTAQAATTMASPRGSGSSTSLSTVGSEGDPSPACSASRPEPL. A compositionally biased stretch (low complexity) spans 45–62; it reads SPRGSGSSTSLSTVGSEG. A DH domain is found at 98 to 279; the sequence is RLERVAREIV…TAVAWYINDM (182 aa). A PH domain is found at 309–407; the sequence is ELVLEGTFRG…WIHCLQRLFF (99 aa). Disordered stretches follow at residues 431–623, 684–743, 820–855, 907–979, 991–1028, 1047–1069, and 1125–1146; these read PKSK…IPCI, LPGP…SVQG, MQRA…EAEP, NVSD…PSAG, TTSL…EQRD, PVCT…STDF, and PLSS…SLTD. The residue at position 441 (threonine 441) is a Phosphothreonine. A phosphoserine mark is found at serine 446 and serine 465. The segment covering 560–572 has biased composition (basic and acidic residues); the sequence is DIPKFPRDSRVPV. Positions 588-600 are enriched in acidic residues; that stretch reads SEEEEEEDLETDE. 5 stretches are compositionally biased toward polar residues: residues 703 to 714, 820 to 831, 907 to 921, 930 to 945, and 956 to 972; these read SGSNPGRLSESP, MQRAETRASTNA, NVSD…SSNS, GQSN…TSLL, and PTAS…SQVP. Polar residues predominate over residues 1049 to 1059; that stretch reads CTSSPDQQIPA. Threonine 1215 carries the phosphothreonine modification. 2 positions are modified to phosphoserine: serine 1219 and serine 1269. Residues 1250–1340 form a disordered region; that stretch reads RRQGPGGEGT…VGPSQGPGGS (91 aa). Pro residues predominate over residues 1276–1288; the sequence is PSPPPQPQPPAPP. The segment covering 1319–1333 has biased composition (low complexity); sequence HPALLAAPHPGAVGP.

As to expression, expressed in thymus, skeletal muscle, lung, testis, uterus, pancreas and heart and also expressed during embryogenesis.

May be a transforming oncogene with exchange activity for CDC42. May be a guanine-nucleotide exchange factor (GEF) for RAC1 and CDC42. Activated by the binding to subunits beta and gamma of the heterotrimeric guanine nucleotide-binding protein (G protein). Involved in the regulation of actin polymerization. This Mus musculus (Mouse) protein is Pleckstrin homology domain-containing family G member 2 (Plekhg2).